Consider the following 308-residue polypeptide: MQEIESLHQSVLLQEVLQAFMPLEEGVLIDCTLGLGGHSKALLSQKPHLKLIGIDKDKFAQEIAKERLKAFEGRYNLLSGGFAKRFKEALETHNKEIKGVLVDLGVSSLQLDDDNRGFNFHSHTLDMRMDLESELNAQKVINSYPIVALEKIFRDYGEIKEYKKIAHKIAERRAKKPFKNAKDLSEFLSSFSKNKKIHPATLVFQAVRIEVNSELEELKEFLQCARNLKGAILCVISFHSLEDALVKNAFKDYAKNCICDPSSFKCACSNNHALGEILTKKPITPSPEEIKNNRRSRSAKMRVFQFKP.

Residues G36 to H38, D55, F82, D103, and Q110 contribute to the S-adenosyl-L-methionine site.

This sequence belongs to the methyltransferase superfamily. RsmH family.

The protein localises to the cytoplasm. The catalysed reaction is cytidine(1402) in 16S rRNA + S-adenosyl-L-methionine = N(4)-methylcytidine(1402) in 16S rRNA + S-adenosyl-L-homocysteine + H(+). In terms of biological role, specifically methylates the N4 position of cytidine in position 1402 (C1402) of 16S rRNA. This chain is Ribosomal RNA small subunit methyltransferase H, found in Helicobacter pylori (strain ATCC 700392 / 26695) (Campylobacter pylori).